Here is a 241-residue protein sequence, read N- to C-terminus: 2-C-methyl-D-erythritol 4-phosphate cytidylyltransferase (241 aa).

It belongs to the IspD/TarI cytidylyltransferase family. IspD subfamily. As to quaternary structure, homodimer.

It carries out the reaction 2-C-methyl-D-erythritol 4-phosphate + CTP + H(+) = 4-CDP-2-C-methyl-D-erythritol + diphosphate. It participates in isoprenoid biosynthesis; isopentenyl diphosphate biosynthesis via DXP pathway; isopentenyl diphosphate from 1-deoxy-D-xylulose 5-phosphate: step 2/6. Functionally, catalyzes the formation of 4-diphosphocytidyl-2-C-methyl-D-erythritol from CTP and 2-C-methyl-D-erythritol 4-phosphate (MEP). The polypeptide is 2-C-methyl-D-erythritol 4-phosphate cytidylyltransferase (Yersinia pseudotuberculosis serotype I (strain IP32953)).